Here is a 347-residue protein sequence, read N- to C-terminus: Farnesyl pyrophosphate synthase ERG20 (347 aa).

Positions 50, 53, and 88 each coordinate isopentenyl diphosphate. Positions 95 and 99 each coordinate Mg(2+). A dimethylallyl diphosphate-binding site is contributed by arginine 104. Arginine 105 is an isopentenyl diphosphate binding site. Lysine 192, threonine 193, glutamine 232, lysine 249, and lysine 258 together coordinate dimethylallyl diphosphate.

Belongs to the FPP/GGPP synthase family. The cofactor is Mg(2+).

The enzyme catalyses isopentenyl diphosphate + dimethylallyl diphosphate = (2E)-geranyl diphosphate + diphosphate. It carries out the reaction isopentenyl diphosphate + (2E)-geranyl diphosphate = (2E,6E)-farnesyl diphosphate + diphosphate. Its pathway is isoprenoid biosynthesis; farnesyl diphosphate biosynthesis; farnesyl diphosphate from geranyl diphosphate and isopentenyl diphosphate: step 1/1. It functions in the pathway isoprenoid biosynthesis; geranyl diphosphate biosynthesis; geranyl diphosphate from dimethylallyl diphosphate and isopentenyl diphosphate: step 1/1. Its function is as follows. Farnesyl pyrophosphate synthase; part of the second module of ergosterol biosynthesis pathway that includes the middle steps of the pathway. ERG20 catalyzes the sequential condensation of isopentenyl pyrophosphate with dimethylallyl pyrophosphate, and then with the resultant geranylpyrophosphate to the ultimate product farnesyl pyrophosphate. The second module is carried out in the vacuole and involves the formation of farnesyl diphosphate, which is also an important intermediate in the biosynthesis of ubiquinone, dolichol, heme and prenylated proteins. Activity by the mevalonate kinase ERG12 (FG05912) first converts mevalonate into 5-phosphomevalonate. 5-phosphomevalonate is then further converted to 5-diphosphomevalonate by the phosphomevalonate kinase ERG8 (FG09764). The diphosphomevalonate decarboxylase ERG19 (FG10424) then produces isopentenyl diphosphate. The isopentenyl-diphosphate delta-isomerase IDI1 (FG09722) then catalyzes the 1,3-allylic rearrangement of the homoallylic substrate isopentenyl (IPP) to its highly electrophilic allylic isomer, dimethylallyl diphosphate (DMAPP). Finally the farnesyl diphosphate synthase ERG20 (FG06784) catalyzes the sequential condensation of isopentenyl pyrophosphate with dimethylallyl pyrophosphate, and then with the resultant geranylpyrophosphate to the ultimate product farnesyl pyrophosphate. This is Farnesyl pyrophosphate synthase ERG20 from Gibberella zeae (strain ATCC MYA-4620 / CBS 123657 / FGSC 9075 / NRRL 31084 / PH-1) (Wheat head blight fungus).